A 418-amino-acid chain; its full sequence is Serine hydroxymethyltransferase (418 aa).

(6S)-5,6,7,8-tetrahydrofolate-binding positions include Leu-121 and 125-127 (GHL). Lys-230 bears the N6-(pyridoxal phosphate)lysine mark. 356–358 (SPF) contacts (6S)-5,6,7,8-tetrahydrofolate.

The protein belongs to the SHMT family. In terms of assembly, homodimer. The cofactor is pyridoxal 5'-phosphate.

Its subcellular location is the cytoplasm. It catalyses the reaction (6R)-5,10-methylene-5,6,7,8-tetrahydrofolate + glycine + H2O = (6S)-5,6,7,8-tetrahydrofolate + L-serine. The protein operates within one-carbon metabolism; tetrahydrofolate interconversion. It participates in amino-acid biosynthesis; glycine biosynthesis; glycine from L-serine: step 1/1. Functionally, catalyzes the reversible interconversion of serine and glycine with tetrahydrofolate (THF) serving as the one-carbon carrier. This reaction serves as the major source of one-carbon groups required for the biosynthesis of purines, thymidylate, methionine, and other important biomolecules. Also exhibits THF-independent aldolase activity toward beta-hydroxyamino acids, producing glycine and aldehydes, via a retro-aldol mechanism. The sequence is that of Serine hydroxymethyltransferase from Pseudoalteromonas atlantica (strain T6c / ATCC BAA-1087).